The chain runs to 411 residues: Meiotically up-regulated gene 147 protein (411 aa).

Disordered stretches follow at residues 1 to 52 (MLAQ…FENK), 102 to 137 (EREESGHDEEEADKDASFTGYYNSRNNDEEGSELAD), and 156 to 191 (HQHEDEFSSSNKDKGFTYEKPVTELPPKRPPYHYES). The segment covering 33–43 (TQNESNLQQSE) has biased composition (polar residues). Basic and acidic residues predominate over residues 156-172 (HQHEDEFSSSNKDKGFT).

The protein localises to the cytoplasm. The protein resides in the nucleus. In terms of biological role, has a role in meiosis. The protein is Meiotically up-regulated gene 147 protein (mug147) of Schizosaccharomyces pombe (strain 972 / ATCC 24843) (Fission yeast).